The sequence spans 412 residues: Polyferredoxin protein MvhB (412 aa).

12 4Fe-4S ferredoxin-type domains span residues 2-29, 30-57, 66-95, 96-127, 138-166, 168-197, 207-236, 237-265, 275-304, 311-344, 356-385, and 386-412; these read IVIN…VKPE, DVIY…HEDI, KKIT…LVND, GKAS…IEGV, DKPI…LPKY, ESIE…ISGK, ENFT…PKSD, LTVS…LEVK, EGIV…VVSP, GLKK…LVEV, NRIQ…LTDD, and EKLP…LLIK. Residues Cys9, Cys12, Cys15, and Cys19 each contribute to the [4Fe-4S] cluster site. Residues Cys75, Cys78, Cys81, Cys85, Cys107, Cys110, Cys113, Cys117, Cys146, Cys149, Cys152, Cys156, Cys177, Cys180, Cys183, Cys187, Cys216, Cys219, Cys222, Cys226, Cys245, Cys248, Cys251, Cys255, Cys284, Cys287, Cys290, Cys294, Cys324, Cys327, Cys330, Cys334, Cys365, Cys368, Cys371, and Cys375 each contribute to the [4Fe-4S] cluster site.

The cofactor is [4Fe-4S] cluster.

In Methanothermus fervidus, this protein is Polyferredoxin protein MvhB (mvhB).